Consider the following 124-residue polypeptide: UPF0102 protein MSMEG_2508/MSMEI_2448 (124 aa).

It belongs to the UPF0102 family.

The polypeptide is UPF0102 protein MSMEG_2508/MSMEI_2448 (Mycolicibacterium smegmatis (strain ATCC 700084 / mc(2)155) (Mycobacterium smegmatis)).